The primary structure comprises 294 residues: Protease HtpX (294 aa).

2 helical membrane passes run Ile-4 to Leu-24 and Gly-34 to Met-52. His-139 serves as a coordination point for Zn(2+). The active site involves Glu-140. His-143 is a Zn(2+) binding site. The next 2 membrane-spanning stretches (helical) occupy residues Val-158–Leu-178 and Leu-194–Ile-214. Glu-223 lines the Zn(2+) pocket.

It belongs to the peptidase M48B family. The cofactor is Zn(2+).

The protein resides in the cell inner membrane. The protein is Protease HtpX of Klebsiella pneumoniae subsp. pneumoniae (strain ATCC 700721 / MGH 78578).